A 235-amino-acid chain; its full sequence is Type II secretion system protein N (235 aa).

Residues 1–34 (MIPRRSSDITIKTRSDVLPFSGASSRWLQRYAPA) are Cytoplasmic-facing. The helical; Signal-anchor for type II membrane protein transmembrane segment at 35-55 (LLAVALIIAMSISLAWQAAGW) threads the bilayer. At 56–235 (LRLQRSPVAV…EPTTTPTESD (180 aa)) the chain is on the periplasmic side. Residues 205 to 235 (DALRQQMEATPIAEPAEEDSSEPTTTPTESD) form a disordered region. Residues 226 to 235 (EPTTTPTESD) are compositionally biased toward low complexity.

Its subcellular location is the cell inner membrane. Its function is as follows. Involved in a type II secretion system (T2SS, formerly general secretion pathway, GSP) for the export of proteins. Required for the translocation of a variety of enzymes across the outer membrane. The polypeptide is Type II secretion system protein N (xcpP) (Pseudomonas aeruginosa (strain ATCC 15692 / DSM 22644 / CIP 104116 / JCM 14847 / LMG 12228 / 1C / PRS 101 / PAO1)).